A 254-amino-acid chain; its full sequence is 5'-nucleotidase SurE (254 aa).

4 residues coordinate a divalent metal cation: aspartate 8, aspartate 9, serine 38, and asparagine 91.

The protein belongs to the SurE nucleotidase family. It depends on a divalent metal cation as a cofactor.

The protein resides in the cytoplasm. The enzyme catalyses a ribonucleoside 5'-phosphate + H2O = a ribonucleoside + phosphate. In terms of biological role, nucleotidase that shows phosphatase activity on nucleoside 5'-monophosphates. This chain is 5'-nucleotidase SurE, found in Anaeromyxobacter sp. (strain Fw109-5).